The sequence spans 561 residues: Arginine--tRNA ligase (561 aa).

A 'HIGH' region motif is present at residues 129 to 139 (ANPTGPLHVGH).

It belongs to the class-I aminoacyl-tRNA synthetase family. Monomer.

The protein localises to the cytoplasm. The enzyme catalyses tRNA(Arg) + L-arginine + ATP = L-arginyl-tRNA(Arg) + AMP + diphosphate. This Bordetella parapertussis (strain 12822 / ATCC BAA-587 / NCTC 13253) protein is Arginine--tRNA ligase.